A 237-amino-acid polypeptide reads, in one-letter code: Mediator of RNA polymerase II transcription subunit 20 (237 aa).

Belongs to the Mediator complex subunit 20 family. In terms of assembly, component of the Mediator complex.

The protein localises to the nucleus. Component of the Mediator complex, a coactivator involved in the regulated transcription of nearly all RNA polymerase II-dependent genes. Mediator functions as a bridge to convey information from gene-specific regulatory proteins to the basal RNA polymerase II transcription machinery. Mediator is recruited to promoters by direct interactions with regulatory proteins and serves as a scaffold for the assembly of a functional preinitiation complex with RNA polymerase II and the general transcription factors. This is Mediator of RNA polymerase II transcription subunit 20 (SRB2) from Scheffersomyces stipitis (strain ATCC 58785 / CBS 6054 / NBRC 10063 / NRRL Y-11545) (Yeast).